Reading from the N-terminus, the 170-residue chain is Peptide deformylase (170 aa).

Positions 91 and 133 each coordinate Fe cation. Glu-134 is a catalytic residue. His-137 provides a ligand contact to Fe cation.

It belongs to the polypeptide deformylase family. Requires Fe(2+) as cofactor.

It carries out the reaction N-terminal N-formyl-L-methionyl-[peptide] + H2O = N-terminal L-methionyl-[peptide] + formate. Functionally, removes the formyl group from the N-terminal Met of newly synthesized proteins. Requires at least a dipeptide for an efficient rate of reaction. N-terminal L-methionine is a prerequisite for activity but the enzyme has broad specificity at other positions. The polypeptide is Peptide deformylase (Histophilus somni (strain 129Pt) (Haemophilus somnus)).